Consider the following 973-residue polypeptide: ATP-dependent DNA helicase homolog RECG1, chloroplastic/mitochondrial (973 aa).

The segment at 1–208 (MAAVTLSPCS…ATSEVEATSD (208 aa)) is sufficient for chloroplastic and mitochondrial trgeting. The segment at 174 to 200 (LLQNDDSSDPREDILDDGSSFTSKTAT) is disordered. The Helicase ATP-binding domain occupies 536-725 (DLKRPVPMNR…LYGDISLTQI (190 aa)). 549-556 (GDVGCGKT) is an ATP binding site. The DEQQ box motif lies at 655–658 (DEQQ). The region spanning 746–904 (GIKEVYSMML…GFYLANIDLL (159 aa)) is the Helicase C-terminal domain.

The protein belongs to the helicase family. RecG subfamily. In terms of tissue distribution, expressed in most tissues, not seen in pollen, ovules or developing seeds.

The protein resides in the plastid. It is found in the chloroplast. Its subcellular location is the mitochondrion. It carries out the reaction Couples ATP hydrolysis with the unwinding of duplex DNA by translocating in the 3'-5' direction.. It catalyses the reaction ATP + H2O = ADP + phosphate + H(+). Plays a critical role in recombination and DNA repair. Helps process Holliday junction (HJ) intermediates to mature products by catalyzing branch migration. Has replication fork regression activity, unwinds stalled or blocked replication forks to make a HJ that can be resolved. Has a DNA unwinding activity characteristic of a DNA helicase with 3'-5' polarity. Its function is as follows. Plays a role in recombination surveillance and repair of double-stranded (ds)DNA breaks in the mitochondrion. May be able to dissociate D- and R-loops. Able to complement UV sensitivity of a recG deletion in E.coli. This chain is ATP-dependent DNA helicase homolog RECG1, chloroplastic/mitochondrial, found in Arabidopsis thaliana (Mouse-ear cress).